The following is a 414-amino-acid chain: NADH-quinone oxidoreductase subunit D (414 aa).

It belongs to the complex I 49 kDa subunit family. NDH-1 is composed of 14 different subunits. Subunits NuoB, C, D, E, F, and G constitute the peripheral sector of the complex.

Its subcellular location is the cell inner membrane. It carries out the reaction a quinone + NADH + 5 H(+)(in) = a quinol + NAD(+) + 4 H(+)(out). Functionally, NDH-1 shuttles electrons from NADH, via FMN and iron-sulfur (Fe-S) centers, to quinones in the respiratory chain. The immediate electron acceptor for the enzyme in this species is believed to be ubiquinone. Couples the redox reaction to proton translocation (for every two electrons transferred, four hydrogen ions are translocated across the cytoplasmic membrane), and thus conserves the redox energy in a proton gradient. This chain is NADH-quinone oxidoreductase subunit D, found in Akkermansia muciniphila (strain ATCC BAA-835 / DSM 22959 / JCM 33894 / BCRC 81048 / CCUG 64013 / CIP 107961 / Muc).